Consider the following 146-residue polypeptide: uncharacterized protein (146 aa).

Residues 34–135 (EDKIVNDVMT…PLLEKAHALF (102 aa)) form the Glutaredoxin domain. Cys-54 serves as a coordination point for [2Fe-2S] cluster.

This sequence belongs to the glutaredoxin family. Monothiol subfamily.

This is an uncharacterized protein from Caenorhabditis elegans.